A 466-amino-acid polypeptide reads, in one-letter code: Asparagine--tRNA ligase (466 aa).

It belongs to the class-II aminoacyl-tRNA synthetase family. As to quaternary structure, homodimer.

Its subcellular location is the cytoplasm. It catalyses the reaction tRNA(Asn) + L-asparagine + ATP = L-asparaginyl-tRNA(Asn) + AMP + diphosphate + H(+). The polypeptide is Asparagine--tRNA ligase (Xylella fastidiosa (strain 9a5c)).